We begin with the raw amino-acid sequence, 308 residues long: uncharacterized protein (308 aa).

Residues 1-60 (MNYSLKQLKVFVTVAQEKSFSRAGERIGLSQSAVSHSVKELENHTGVRLLDRTTREVVLT) enclose the HTH lysR-type domain. A DNA-binding region (H-T-H motif) is located at residues 20-39 (FSRAGERIGLSQSAVSHSVK).

It belongs to the LysR transcriptional regulatory family.

This is an uncharacterized protein from Shigella flexneri.